Here is a 116-residue protein sequence, read N- to C-terminus: Large ribosomal subunit protein bL17 (116 aa).

It belongs to the bacterial ribosomal protein bL17 family. Part of the 50S ribosomal subunit. Contacts protein L32.

The chain is Large ribosomal subunit protein bL17 from Helicobacter acinonychis (strain Sheeba).